A 259-amino-acid chain; its full sequence is Troponin T, fast skeletal muscle (259 aa).

Positions 1–36 (MSDEETEQVEEQYEEEEEAQEEEVQEEAPEPEEVQE) are enriched in acidic residues. Residues 1 to 62 (MSDEETEQVE…EKVDFDDIQK (62 aa)) form a disordered region. S2 bears the N-acetylserine mark. A Phosphoserine modification is found at S2. Residues 50–62 (PEGEKVDFDDIQK) show a composition bias toward basic and acidic residues. At S78 the chain carries Phosphoserine. The segment covering 101-143 (RAERAEQQRIRAEKERERQNRLAEEKARREEEDAKRRAEDDLK) has biased composition (basic and acidic residues). Residues 101-180 (RAERAEQQRI…TAREMKKKIL (80 aa)) form a disordered region. A phosphoserine mark is found at S149, S156, and S157. A compositionally biased stretch (basic and acidic residues) spans 171–180 (TAREMKKKIL). S193 carries the post-translational modification Phosphoserine. Y209 bears the Phosphotyrosine mark. Positions 235-259 (RIDQAQKHSKKAGATAKGKVGGRWK) are disordered.

The protein belongs to the troponin T family.

Troponin T is the tropomyosin-binding subunit of troponin, the thin filament regulatory complex which confers calcium-sensitivity to striated muscle actomyosin ATPase activity. The protein is Troponin T, fast skeletal muscle (Tnnt3) of Rattus norvegicus (Rat).